The primary structure comprises 105 residues: Iron-sulfur cluster assembly protein CyaY (105 aa).

It belongs to the frataxin family.

Involved in iron-sulfur (Fe-S) cluster assembly. May act as a regulator of Fe-S biogenesis. In Psychromonas ingrahamii (strain DSM 17664 / CCUG 51855 / 37), this protein is Iron-sulfur cluster assembly protein CyaY.